We begin with the raw amino-acid sequence, 456 residues long: RuvB-like 1 (456 aa).

Lys2 is covalently cross-linked (Glycyl lysine isopeptide (Lys-Gly) (interchain with G-Cter in SUMO2)). Residue 70-77 coordinates ATP; it reads GPPGTGKT. Lys225 is covalently cross-linked (Glycyl lysine isopeptide (Lys-Gly) (interchain with G-Cter in SUMO1); alternate). A Glycyl lysine isopeptide (Lys-Gly) (interchain with G-Cter in SUMO2); alternate cross-link involves residue Lys225. A Glycyl lysine isopeptide (Lys-Gly) (interchain with G-Cter in SUMO2) cross-link involves residue Lys445. Lys453 is modified (N6-acetyllysine).

The protein belongs to the RuvB family. Forms homohexameric rings. Can form a dodecamer with RUVBL2 made of two stacked hexameric rings; however, even though RUVBL1 and RUVBL2 are present in equimolar ratio, the oligomeric status of each hexamer is not known. Oligomerization may regulate binding to nucleic acids and conversely, binding to nucleic acids may affect the dodecameric assembly. Interaction of the complex with DHX34 results in conformational changes of the N-terminus of the RUVBL2 subunits, resulting in loss of nucleotide binding ability and ATP hydrolysis of the complex. Interacts with the transcriptional activation domain of MYC. Component of the RNA polymerase II holoenzyme complex. May also act to bridge the LEF1/TCF1-CTNNB1 complex and TBP. Component of the NuA4 histone acetyltransferase complex which contains the catalytic subunit KAT5/TIP60 and the subunits EP400, TRRAP/PAF400, BRD8/SMAP, EPC1, DMAP1/DNMAP1, RUVBL1/TIP49, RUVBL2, ING3, actin, ACTL6A/BAF53A, MORF4L1/MRG15, MORF4L2/MRGX, MRGBP, YEATS4/GAS41, VPS72/YL1 and MEAF6. The NuA4 complex interacts with MYC and the adenovirus E1A protein. RUVBL1 interacts with EP400. Component of a NuA4-related complex which contains EP400, TRRAP/PAF400, SRCAP, BRD8/SMAP, EPC1, DMAP1/DNMAP1, RUVBL1/TIP49, RUVBL2, actin, ACTL6A/BAF53A, VPS72 and YEATS4/GAS41. Component of the BAF53 complex, at least composed of ACTL6A/BAF53A, RUVBL1/TIP49, SMARCA2/BRM, and TRRAP/PAF400. Component of some MLL1/MLL complex, at least composed of the core components KMT2A/MLL1, ASH2L, HCFC1/HCF1, WDR5 and RBBP5, as well as the facultative components BACC1, CHD8, E2F6, HSP70, INO80C, KANSL1, LAS1L, MAX, MCRS1, MGA, MYST1/MOF, PELP1, PHF20, PRP31, RING2, RUVB1/TIP49A, RUVB2/TIP49B, SENP3, TAF1, TAF4, TAF6, TAF7, TAF9 and TEX10. Associates with alpha and gamma tubulins, particularly during metaphase and early anaphase. Interacts with NPAT. Component of the chromatin-remodeling INO80 complex; specifically part of a complex module associated with the helicase ATP-binding and the helicase C-terminal domain of INO80. Interacts with IGHMBP2. Interacts with OFD1. Interacts with HINT1. Component of a complex with USP49 and PSMC5. Component of a SWR1-like complex. Component of the R2TP complex composed at least of RUVBL1, RUVBL2, RPAP3 and PIHD1. Component of the PAQosome complex which is responsible for the biogenesis of several protein complexes and which consists of R2TP complex members RUVBL1, RUVBL2, RPAP3 and PIH1D1, URI complex members PFDN2, PFDN6, PDRG1, UXT and URI1 as well as ASDURF, POLR2E and DNAAF10/WDR92. Interacts with PIH1D1. Interacts with ITFG1. Interacts with WAC; WAC positively regulates MTOR activity by promoting the assembly of the TTT complex composed of TELO2, TTI1 and TTI2 and the RUVBL complex composed of RUVBL1 and RUVBL2 into the TTT-RUVBL complex which leads to the dimerization of the mTORC1 complex and its subsequent activation. The RUVBL1/RUVBL2 complex interacts with ZNHIT1 (via HIT-type zinc finger), ZNHIT3 (via HIT-type zinc finger), ZNHIT6 (via HIT-type zinc finger) and DDX59/ZNHIT5 (via HIT-type zinc finger) in the presence of ADP. Interacts with NOPCHAP1; the interaction is direct and disrupted upon ATP binding. Interacts with SMG1. Interacts with NOP2, NOP56 and NUFIP1.

The protein localises to the nucleus matrix. The protein resides in the nucleus. Its subcellular location is the nucleoplasm. It is found in the cytoplasm. It localises to the membrane. The protein localises to the cytoskeleton. The protein resides in the microtubule organizing center. Its subcellular location is the centrosome. It is found in the dynein axonemal particle. The catalysed reaction is ATP + H2O = ADP + phosphate + H(+). In terms of biological role, possesses single-stranded DNA-stimulated ATPase and ATP-dependent DNA helicase (3' to 5') activity; hexamerization is thought to be critical for ATP hydrolysis and adjacent subunits in the ring-like structure contribute to the ATPase activity. Component of the NuA4 histone acetyltransferase complex which is involved in transcriptional activation of select genes principally by acetylation of nucleosomal histones H4 and H2A. This modification may both alter nucleosome-DNA interactions and promote interaction of the modified histones with other proteins which positively regulate transcription. This complex may be required for the activation of transcriptional programs associated with oncogene and proto-oncogene mediated growth induction, tumor suppressor mediated growth arrest and replicative senescence, apoptosis, and DNA repair. The NuA4 complex ATPase and helicase activities seem to be, at least in part, contributed by the association of RUVBL1 and RUVBL2 with EP400. NuA4 may also play a direct role in DNA repair when recruited to sites of DNA damage. Component of a SWR1-like complex that specifically mediates the removal of histone H2A.Z/H2AZ1 from the nucleosome. Proposed core component of the chromatin remodeling INO80 complex which exhibits DNA- and nucleosome-activated ATPase activity and catalyzes ATP-dependent nucleosome sliding. Plays an essential role in oncogenic transformation by MYC and also modulates transcriptional activation by the LEF1/TCF1-CTNNB1 complex. Essential for cell proliferation. May be able to bind plasminogen at cell surface and enhance plasminogen activation. The polypeptide is RuvB-like 1 (Ruvbl1) (Mus musculus (Mouse)).